The primary structure comprises 120 residues: MPFAQPPDYSKSVFPIAVGIAVAVVLFTLTRSTLPQVGDNIHNLPHGGNYQDGTKRISYCGPRDSFPSSSLISSGTPMIIGIIIFLIFAIYVSEKWSRSGSRRCSCCVPGAPACTATVHE.

The Cytoplasmic portion of the chain corresponds to 1–8 (MPFAQPPD). Residues 9-29 (YSKSVFPIAVGIAVAVVLFTL) traverse the membrane as a helical segment. The Lumenal portion of the chain corresponds to 30 to 71 (TRSTLPQVGDNIHNLPHGGNYQDGTKRISYCGPRDSFPSSSL). Residues 72 to 92 (ISSGTPMIIGIIIFLIFAIYV) form a helical membrane-spanning segment. Topologically, residues 93–120 (SEKWSRSGSRRCSCCVPGAPACTATVHE) are cytoplasmic.

It belongs to the Tymovirales TGBp2 protein family.

Its subcellular location is the host endoplasmic reticulum membrane. Its function is as follows. Plays a role in viral cell-to-cell propagation, by facilitating genome transport to neighboring plant cells through plasmosdesmata,. In Crataegus (hawthorn), this protein is Movement protein TGB2.